The primary structure comprises 1453 residues: NRPS-like tryptophan epimerase fscC (1453 aa).

The adenylation stretch occupies residues 37–433 (SYGELSAMSS…ATHLIRNCVV (397 aa)). Residues 544 to 626 (TGSRQSTRHK…LFHTSKSRFT (83 aa)) form the Carrier domain. Ser-586 carries the post-translational modification O-(pantetheine 4'-phosphoryl)serine. The tract at residues 639-1053 (FPLSPVQRFF…KDVLESAGVF (415 aa)) is epimerization (E) domain. The tract at residues 1181 to 1391 (FFGLQSNERA…AGSSLHQHNQ (211 aa)) is condensation.

The protein belongs to the NRP synthetase family. Pantetheine 4'-phosphate serves as cofactor.

It functions in the pathway secondary metabolite biosynthesis. Its function is as follows. NRPS-like tryptophan epimerase; part of the fragmented gene cluster that mediates the biosynthesis of fusarochromene, a tryptophan-derived metabolite closely related to a group of mycotoxins including fusarochromanone. Within the pathway, fscC catalyzes the first step via epimerization of L-tryptophan to provide the intermediate D-tryptophan. D-tryptophan is subsequently hydroxylated by the tryptophan 6-hydroxylase fscE to yield 6-hydroxytryptophan. The pyrrole ring undergoes cleavaged by the tryptophan 2,3-dioxygenase fscD and is finally converted to 4-hydroxykyrunenine by the hydrolase fscH. The NRPS-like oxidoreductase fscA reduces the carboxyl group to primary alcohol and the DMATS-type prenyltransferase fscG performs prenylation, followed by the formation of a chromene ring catalyzed by the oxidoreductase fscI, which leads to desacetylfusarochromene. Epoxidation by fscF and rearrangement reactions of chromene double bonds convert compound desacetylfusarochromene to fusarochromanones. Although specific acetyltransferases were not found near the fsc gene cluster, several predicted enzymes containing the N-acetyltransferase superfamily domain are present in the genome of F.equiseti. These predicted enzymes may have the potential to convert desacetylfusarochromene to fusarochromene. This Fusarium equiseti (Fusarium scirpi) protein is NRPS-like tryptophan epimerase fscC.